Reading from the N-terminus, the 270-residue chain is 4-hydroxy-tetrahydrodipicolinate reductase (270 aa).

NAD(+)-binding positions include 9 to 14 (GAGGRM) and Glu35. An NADP(+)-binding site is contributed by Arg36. NAD(+) contacts are provided by residues 99–101 (GTT) and 123–126 (ASNF). His156 acts as the Proton donor/acceptor in catalysis. His157 provides a ligand contact to (S)-2,3,4,5-tetrahydrodipicolinate. Residue Lys160 is the Proton donor of the active site. Residue 166-167 (GT) participates in (S)-2,3,4,5-tetrahydrodipicolinate binding.

The protein belongs to the DapB family.

It localises to the cytoplasm. It catalyses the reaction (S)-2,3,4,5-tetrahydrodipicolinate + NAD(+) + H2O = (2S,4S)-4-hydroxy-2,3,4,5-tetrahydrodipicolinate + NADH + H(+). The catalysed reaction is (S)-2,3,4,5-tetrahydrodipicolinate + NADP(+) + H2O = (2S,4S)-4-hydroxy-2,3,4,5-tetrahydrodipicolinate + NADPH + H(+). It functions in the pathway amino-acid biosynthesis; L-lysine biosynthesis via DAP pathway; (S)-tetrahydrodipicolinate from L-aspartate: step 4/4. In terms of biological role, catalyzes the conversion of 4-hydroxy-tetrahydrodipicolinate (HTPA) to tetrahydrodipicolinate. In Haemophilus influenzae (strain 86-028NP), this protein is 4-hydroxy-tetrahydrodipicolinate reductase.